Reading from the N-terminus, the 912-residue chain is MKNNKKVGTEDSTKWMLESVEIDPKGDSSVKQPESTINSNNPESSGAGGGILKNVSKNLAVGSIIRSMSVNKWRKSGNLGSPSTRKSGNLGPPLPVSQVKRPGPQRVERTTSSAARGLQSLRFLDRTVTGRERDSWRSIENRFNQFAVDGRLPKDKFGVCIGMGDTLEFAAKVYEALGRRRQIKTENGIDKEQLKLFWEDMIKKDLDCRLQIFFDMCDKDGDGKLTEEEVKEVIVLSASANRLVNLKKNAASYASLIMEELDPNEQGYIEMWQLEVLLTGIVSNADSHKVVRKSQQLTRAMIPKRYRTPTSKYVVVTAELMYEHWKKIWVVTLWLAVNVVLFMWKYEEFTTSPLYNITGRCLCAAKGTAEILKLNMALILVPVLRRTLTFLRSTFLNHLIPFDDNINFHKLIAVAIAVISLLHTALHMLCNYPRLSSCPYNFYSDYAGNLLGAKQPTYLGLMLTPVSVTGVLMIIFMGISFTLAMHYFRRNIVKLPIPFNRLAGFNSFWYAHHLLVIAYALLIIHGYILIIEKPWYQKTTWMYVAIPMVLYASERLFSRVQEHNHRVHIIKAIVYSGNVLALYMTKPQGFKYKSGMYMFVKCPDISKFEWHPFSITSAPGDEYLSVHIRALGDWTSELRNRFAETCEPHQKSKPSPNDLIRMETRARGANPHVEESQALFPRIFIKGPYGAPAQSYQKFDILLLIGLGIGATPFISILKDMLNNLKPGIPKTGQKYEGSVGGESLGGSSVYGGSSVNGGGSVNGGGSVSGGGRKFPQRAYFYWVTREQASFEWFKGVMDDIAVYDKTNVIEMHNYLTSMYEAGDARSALIAMVQKLQHAKNGVDIVSESRIRTHFARPNWRKVFSELSNKHETSRIGVFYCGSPTLVRPLKSLCQEFSLESSTRFTFHKENF.

2 disordered regions span residues 1–51 (MKNN…GGGI) and 73–112 (WRKS…RTTS). At 1–323 (MKNNKKVGTE…VVVTAELMYE (323 aa)) the chain is on the cytoplasmic side. 2 stretches are compositionally biased toward polar residues: residues 29 to 44 (SVKQ…NPES) and 78 to 87 (NLGSPSTRKS). EF-hand-like regions lie at residues 147–155 (AVDGRLPKD) and 181–193 (RQIK…DKEQ). The 36-residue stretch at 205-240 (DLDCRLQIFFDMCDKDGDGKLTEEEVKEVIVLSASA) folds into the EF-hand domain. Ca(2+) contacts are provided by Asp218, Asp220, Asp222, Lys224, and Glu229. Position 294 is a phosphoserine (Ser294). A helical membrane pass occupies residues 324-344 (HWKKIWVVTLWLAVNVVLFMW). Over 345–363 (KYEEFTTSPLYNITGRCLC) the chain is Extracellular. The helical transmembrane segment at 364-384 (AAKGTAEILKLNMALILVPVL) threads the bilayer. Residues 366–523 (KGTAEILKLN…LLVIAYALLI (158 aa)) enclose the Ferric oxidoreductase domain. Topologically, residues 385–410 (RRTLTFLRSTFLNHLIPFDDNINFHK) are cytoplasmic. The helical transmembrane segment at 411–431 (LIAVAIAVISLLHTALHMLCN) threads the bilayer. Residues 432–458 (YPRLSSCPYNFYSDYAGNLLGAKQPTY) lie on the Extracellular side of the membrane. Residues 459 to 479 (LGLMLTPVSVTGVLMIIFMGI) form a helical membrane-spanning segment. Residues 480–510 (SFTLAMHYFRRNIVKLPIPFNRLAGFNSFWY) lie on the Cytoplasmic side of the membrane. Residues 511-531 (AHHLLVIAYALLIIHGYILII) traverse the membrane as a helical segment. Residues 532-697 (EKPWYQKTTW…PYGAPAQSYQ (166 aa)) lie on the Extracellular side of the membrane. Positions 562 to 695 (EHNHRVHIIK…KGPYGAPAQS (134 aa)) constitute an FAD-binding FR-type domain. A helical transmembrane segment spans residues 698–718 (KFDILLLIGLGIGATPFISIL). Over 719-912 (KDMLNNLKPG…TRFTFHKENF (194 aa)) the chain is Cytoplasmic.

This sequence belongs to the RBOH (TC 5.B.1.3) family. Monomer and homodimer.

It localises to the membrane. In terms of biological role, calcium-dependent NADPH oxidase that generates superoxide. The sequence is that of Putative respiratory burst oxidase homolog protein J (RBOHJ) from Arabidopsis thaliana (Mouse-ear cress).